A 287-amino-acid chain; its full sequence is MKDWEQKKVASPNQPPPAALEEAKISGTCGSPRTSPEPHDPGGSQPLTPRMESHSEEEDRPGAGGGLGWNGRSPRTQSLGACSAEAMLARKKHRRRPSKRKRHWRPYLELSWAEKQQRDERQSQRASRVREEMFAKGQPVAPYNTTQFLMNDRDPEEPNLVPQGASHPGSSGESEAGDSDGQGRARGEFQQKDFSEAYERYHTESLQGRSKEELVRDYLDLERRLSQAEEEMRRLRQLRGCTNWRPCYQVEELAAEVERLRTENQRLRQENEMWNREGGRRGGQPGS.

2 disordered regions span residues 1–212 and 266–287; these read MKDW…RSKE and RLRQ…QPGS. The residue at position 31 (S31) is a Phosphoserine. 2 positions are modified to phosphothreonine: T34 and T48. A phosphoserine mark is found at S53, S55, S73, S78, and S83. Basic residues predominate over residues 89–105; it reads ARKKHRRRPSKRKRHWR. Residues 115 to 134 are compositionally biased toward basic and acidic residues; sequence KQQRDERQSQRASRVREEMF. The interaction with P-TEFb stretch occupies residues 142–145; the sequence is PYNT. Composition is skewed to basic and acidic residues over residues 181–212 and 266–280; these read GQGR…RSKE and RLRQ…EGGR. Positions 208–278 form a coiled coil; the sequence is GRSKEELVRD…QENEMWNREG (71 aa). The interval 227–287 is interaction with CCNT1, HEXIM1 and HEXIM2; sequence QAEEEMRRLR…GGRRGGQPGS (61 aa).

This sequence belongs to the HEXIM family. As to quaternary structure, homooligomer and heterooligomer with HEXIM1; probably dimeric. Core component of the 7SK RNP complex, at least composed of 7SK RNA, LARP7, MEPCE, HEXIM1 (or HEXIM2) and P-TEFb (composed of CDK9 and CCNT1/cyclin-T1). Interacts with CCNT2.

The protein resides in the nucleus. Its function is as follows. Transcriptional regulator which functions as a general RNA polymerase II transcription inhibitor. Core component of the 7SK RNP complex: in cooperation with 7SK snRNA sequesters P-TEFb in a large inactive 7SK snRNP complex preventing RNA polymerase II phosphorylation and subsequent transcriptional elongation. The sequence is that of Protein HEXIM2 (HEXIM2) from Bos taurus (Bovine).